A 453-amino-acid chain; its full sequence is DNA repair protein RadA (453 aa).

The C4-type zinc-finger motif lies at 10-27 (CTECGATFPKWAGQCADC). 96-103 (GDPGIGKS) is a binding site for ATP. Residues 252-256 (KNRFG) carry the RadA KNRFG motif motif. The lon-protease-like stretch occupies residues 351-453 (DVFLNVVGGV…LEQALDALFE (103 aa)).

It belongs to the RecA family. RadA subfamily.

Functionally, DNA-dependent ATPase involved in processing of recombination intermediates, plays a role in repairing DNA breaks. Stimulates the branch migration of RecA-mediated strand transfer reactions, allowing the 3' invading strand to extend heteroduplex DNA faster. Binds ssDNA in the presence of ADP but not other nucleotides, has ATPase activity that is stimulated by ssDNA and various branched DNA structures, but inhibited by SSB. Does not have RecA's homology-searching function. This chain is DNA repair protein RadA, found in Pseudomonas aeruginosa (strain ATCC 15692 / DSM 22644 / CIP 104116 / JCM 14847 / LMG 12228 / 1C / PRS 101 / PAO1).